A 538-amino-acid polypeptide reads, in one-letter code: Putative cysteine ligase BshC (538 aa).

Residues 248–268 (ISKYKEVQEGLRNQQEVIKEL) are a coiled coil.

This sequence belongs to the BshC family.

Involved in bacillithiol (BSH) biosynthesis. May catalyze the last step of the pathway, the addition of cysteine to glucosamine malate (GlcN-Mal) to generate BSH. This chain is Putative cysteine ligase BshC, found in Bacillus cereus (strain ATCC 14579 / DSM 31 / CCUG 7414 / JCM 2152 / NBRC 15305 / NCIMB 9373 / NCTC 2599 / NRRL B-3711).